Consider the following 130-residue polypeptide: Chemotaxis protein CheY-3 (130 aa).

The region spanning 10–127 (KILIVDDFST…TLKEKLDKIF (118 aa)) is the Response regulatory domain. Asp-15, Asp-16, Asp-60, and Asn-62 together coordinate Mg(2+). Asp-60 carries the 4-aspartylphosphate modification.

As to quaternary structure, interacts with FliM. It depends on Mg(2+) as a cofactor.

The protein resides in the cytoplasm. Acts as a response regulator to control chemotaxis. Involved in the transmission of sensory signals from the chemoreceptors to the flagellar motors. Switches the flagellar rotation by binding to the flagellar motor switch protein FliM. In its active (phosphorylated or acetylated) form, exhibits enhanced binding to a switch component, FliM, at the flagellar motor which induces a change from counterclockwise to clockwise flagellar rotation. This chain is Chemotaxis protein CheY-3, found in Vibrio cholerae serotype O1 (strain ATCC 39315 / El Tor Inaba N16961).